Reading from the N-terminus, the 117-residue chain is Large ribosomal subunit protein bL20 (117 aa).

This sequence belongs to the bacterial ribosomal protein bL20 family.

Binds directly to 23S ribosomal RNA and is necessary for the in vitro assembly process of the 50S ribosomal subunit. It is not involved in the protein synthesizing functions of that subunit. The sequence is that of Large ribosomal subunit protein bL20 from Actinobacillus pleuropneumoniae serotype 7 (strain AP76).